Here is a 261-residue protein sequence, read N- to C-terminus: uncharacterized protein (261 aa).

The span at Thr-20–Gln-34 shows a compositional bias: polar residues. A disordered region spans residues Thr-20–Gly-55. The segment covering Ser-35–Ser-51 has biased composition (low complexity). 3 helical membrane passes run Leu-113–Leu-133, Leu-183–Phe-200, and Ile-204–Val-226.

Belongs to the TVP23 family.

The protein resides in the membrane. This is an uncharacterized protein from Dictyostelium discoideum (Social amoeba).